The chain runs to 1116 residues: MAP kinase kinase kinase mkh1 (1116 aa).

Disordered regions lie at residues 510–601 (LKMP…SNSL) and 618–647 (ALDESDLSGDPFWAIQPKQSSSQVPKENHH). The span at 515 to 531 (NSGSSAPQSPSSNTSAS) shows a compositional bias: low complexity. The span at 553–569 (LRRKNTLTRRPSIRHAR) shows a compositional bias: basic residues. The span at 588–601 (SFDPKASSKSSNSL) shows a compositional bias: low complexity. The segment covering 634–647 (PKQSSSQVPKENHH) has biased composition (polar residues). Residues 825-1094 (WMKGELIGNG…AEELLNHPFM (270 aa)) form the Protein kinase domain. ATP is bound by residues 831 to 839 (IGNGTYGKV) and Lys-854. Residue Asp-955 is the Proton acceptor of the active site.

Belongs to the protein kinase superfamily. STE Ser/Thr protein kinase family. MAP kinase kinase kinase subfamily.

It catalyses the reaction L-seryl-[protein] + ATP = O-phospho-L-seryl-[protein] + ADP + H(+). It carries out the reaction L-threonyl-[protein] + ATP = O-phospho-L-threonyl-[protein] + ADP + H(+). May regulate cell morphology, cell wall integrity, salt resistance, cell cycle reentry from stationary-phase arrest, and filamentous growth in response to stress. Activates the MAP kinase kinase skh1/pek1 by phosphorylation. This chain is MAP kinase kinase kinase mkh1 (mkh1), found in Schizosaccharomyces pombe (strain 972 / ATCC 24843) (Fission yeast).